A 308-amino-acid polypeptide reads, in one-letter code: MSETPRLLFVHAHPDDESLSNGATIAHYTSRGAQVQVVTCTLGEEGEVIGDRWAELTVDHADQLGGYRIFELTEALRALGVSAPIYLGGAGRWRDSGMRGTAPRRRQRFIDADENEAVGALVAIIRELRPHVVVTYDPHGGYGHPDHVHTHFITAAAVASSGVAAGLEVGADEYPGKPWKVPKFYWSVFALSAFEAGMNALQGKDLRPEWTIPPREEFYFGYSDKDIDAVVEATSDVWAAKTAALTAHATQVVVGPTGRACALSNNMVMPIFAQEHYVLAAGSAGNRDERGWETDLLAGLCLDGFDAR.

Zn(2+) is bound by residues His-13, Asp-16, and His-147.

This sequence belongs to the MshB deacetylase family. Requires Zn(2+) as cofactor.

The enzyme catalyses 1D-myo-inositol 2-acetamido-2-deoxy-alpha-D-glucopyranoside + H2O = 1D-myo-inositol 2-amino-2-deoxy-alpha-D-glucopyranoside + acetate. Its function is as follows. Catalyzes the deacetylation of 1D-myo-inositol 2-acetamido-2-deoxy-alpha-D-glucopyranoside (GlcNAc-Ins) in the mycothiol biosynthesis pathway. The protein is 1D-myo-inositol 2-acetamido-2-deoxy-alpha-D-glucopyranoside deacetylase of Mycobacterium leprae (strain Br4923).